The sequence spans 393 residues: NAD(P)H-quinone oxidoreductase subunit H, chloroplastic (393 aa).

Belongs to the complex I 49 kDa subunit family. In terms of assembly, NDH is composed of at least 16 different subunits, 5 of which are encoded in the nucleus.

The protein localises to the plastid. Its subcellular location is the chloroplast thylakoid membrane. It carries out the reaction a plastoquinone + NADH + (n+1) H(+)(in) = a plastoquinol + NAD(+) + n H(+)(out). The enzyme catalyses a plastoquinone + NADPH + (n+1) H(+)(in) = a plastoquinol + NADP(+) + n H(+)(out). Functionally, NDH shuttles electrons from NAD(P)H:plastoquinone, via FMN and iron-sulfur (Fe-S) centers, to quinones in the photosynthetic chain and possibly in a chloroplast respiratory chain. The immediate electron acceptor for the enzyme in this species is believed to be plastoquinone. Couples the redox reaction to proton translocation, and thus conserves the redox energy in a proton gradient. In Hordeum vulgare (Barley), this protein is NAD(P)H-quinone oxidoreductase subunit H, chloroplastic.